The primary structure comprises 228 residues: Small ribosomal subunit protein uS3 (228 aa).

Residues 39–107 form the KH type-2 domain; that stretch reads TREYLQDKLK…PVHINIEEIR (69 aa).

It belongs to the universal ribosomal protein uS3 family. Part of the 30S ribosomal subunit. Forms a tight complex with proteins S10 and S14.

In terms of biological role, binds the lower part of the 30S subunit head. Binds mRNA in the 70S ribosome, positioning it for translation. This is Small ribosomal subunit protein uS3 from Pseudomonas entomophila (strain L48).